Reading from the N-terminus, the 346-residue chain is Heparan sulfate glucosamine 3-O-sulfotransferase 5 (346 aa).

At methionine 1 to lysine 12 the chain is on the cytoplasmic side. Residues leucine 13–glycine 32 form a helical; Signal-anchor for type II membrane protein membrane-spanning segment. The Lumenal portion of the chain corresponds to serine 33–proline 346. An N-linked (GlcNAc...) asparagine glycan is attached at asparagine 75. Lysine 100 to arginine 104 provides a ligand contact to 3'-phosphoadenylyl sulfate. Substrate is bound by residues glutamate 122–asparagine 128 and lysine 155–alanine 158. The N-linked (GlcNAc...) asparagine glycan is linked to asparagine 173. Arginine 183 and serine 191 together coordinate 3'-phosphoadenylyl sulfate. Asparagine 204 carries an N-linked (GlcNAc...) asparagine glycan. Tyrosine 226–lysine 227 serves as a coordination point for substrate. Asparagine 287 carries N-linked (GlcNAc...) asparagine glycosylation. Tyrosine 293 is a 3'-phosphoadenylyl sulfate binding site. Cysteines 294 and 304 form a disulfide. Residue lysine 309 to histidine 313 coordinates 3'-phosphoadenylyl sulfate.

This sequence belongs to the sulfotransferase 1 family.

It localises to the golgi apparatus membrane. It catalyses the reaction alpha-D-glucosaminyl-[heparan sulfate](n) + 3'-phosphoadenylyl sulfate = 3-sulfo-alpha-D-glucosaminyl-[heparan sulfate](n) + adenosine 3',5'-bisphosphate + H(+). Functionally, sulfotransferase that utilizes 3'-phospho-5'-adenylyl sulfate (PAPS) to catalyze the transfer of a sulfo group to position 3 of glucosamine residues in heparan. Catalyzes the rate limiting step in the biosynthesis of heparan sulfate (HSact). This modification is a crucial step in the biosynthesis of anticoagulant heparan sulfate as it completes the structure of the antithrombin pentasaccharide binding site. Also generates GlcUA-GlcNS or IdoUA-GlcNS and IdoUA2S-GlcNH2. The chain is Heparan sulfate glucosamine 3-O-sulfotransferase 5 (Hs3st5) from Mus musculus (Mouse).